The primary structure comprises 214 residues: Germin-like protein (214 aa).

Residues 1–22 (MVMMRIFFFLFLLAFPVFTANA) form the signal peptide. An intrachain disulfide couples cysteine 28 to cysteine 44. The region spanning 58–204 (SGLAKPGNTT…TTCLDEATIK (147 aa)) is the Cupin type-1 domain. Residues histidine 106, histidine 108, and glutamate 113 each contribute to the Mn(2+) site.

This sequence belongs to the germin family. In terms of assembly, oligomer (believed to be a pentamer but probably hexamer). As to expression, cotyledons and leaves.

The protein localises to the secreted. It localises to the extracellular space. Its subcellular location is the apoplast. The chain is Germin-like protein (GLP) from Ipomoea nil (Japanese morning glory).